We begin with the raw amino-acid sequence, 232 residues long: Large ribosomal subunit protein uL1 (232 aa).

It belongs to the universal ribosomal protein uL1 family. As to quaternary structure, part of the 50S ribosomal subunit.

Binds directly to 23S rRNA. The L1 stalk is quite mobile in the ribosome, and is involved in E site tRNA release. Functionally, protein L1 is also a translational repressor protein, it controls the translation of the L11 operon by binding to its mRNA. The polypeptide is Large ribosomal subunit protein uL1 (Clostridium novyi (strain NT)).